The chain runs to 177 residues: Inorganic pyrophosphatase (177 aa).

Positions 31, 45, and 57 each coordinate substrate. The Mg(2+) site is built by D67, D72, and D104. Y141 serves as a coordination point for substrate.

The protein belongs to the PPase family. As to quaternary structure, homohexamer. Requires Mg(2+) as cofactor.

The protein resides in the cytoplasm. It carries out the reaction diphosphate + H2O = 2 phosphate + H(+). Its function is as follows. Catalyzes the hydrolysis of inorganic pyrophosphate (PPi) forming two phosphate ions. This chain is Inorganic pyrophosphatase, found in Halobacterium salinarum (strain ATCC 700922 / JCM 11081 / NRC-1) (Halobacterium halobium).